The chain runs to 428 residues: Methyl-branched lipid omega-hydroxylase (428 aa).

Residue Cys379 coordinates heme.

This sequence belongs to the cytochrome P450 family. Requires heme as cofactor.

The enzyme catalyses a methyl-branched lipid + O2 + 2 reduced ferredoxin [iron-sulfur] cluster + 2 H(+) = an omega-hydroxy-methyl-branched lipid + H2O + 2 oxidized ferredoxin [iron-sulfur] cluster.. The catalysed reaction is cholest-4-en-3-one + 6 reduced [2Fe-2S]-[ferredoxin] + 3 O2 + 5 H(+) = (25R)-3-oxocholest-4-en-26-oate + 6 oxidized [2Fe-2S]-[ferredoxin] + 4 H2O. Its pathway is lipid metabolism; branched-chain fatty acid metabolism. In terms of biological role, primarily hydroxylates the omega-carbon of a number of methyl-branched lipids, including (2E,6E)-farnesol, phytanate, geranylgeraniol, 15-methylpalmitate and (2E,6E)-farnesyl diphosphate. Also catalyzes the sequential oxidation of the terminal methyl of cholest-4-en-3-one into (25R)-26-hydroxycholest-4-en-3-one (alcohol), (25R)-26-oxocholest-4-en-3-one (aldehyde), to finally yield the carboxylic acid (25R)-3-oxocholest-4-en-26-oate. Also able to sequentially oxidize cholesterol itself, not only cholest-4-en-3-one. This chain is Methyl-branched lipid omega-hydroxylase (cyp124), found in Mycobacterium bovis (strain ATCC BAA-935 / AF2122/97).